We begin with the raw amino-acid sequence, 330 residues long: Glycerol-3-phosphate dehydrogenase [NAD(P)+] (330 aa).

4 residues coordinate NADPH: serine 10, tryptophan 11, arginine 31, and lysine 105. Sn-glycerol 3-phosphate-binding residues include lysine 105, glycine 135, and serine 137. Position 139 (alanine 139) interacts with NADPH. Residues lysine 190, aspartate 243, serine 253, arginine 254, and asparagine 255 each contribute to the sn-glycerol 3-phosphate site. Lysine 190 serves as the catalytic Proton acceptor. Arginine 254 lines the NADPH pocket. NADPH-binding residues include valine 278 and glutamate 280.

The protein belongs to the NAD-dependent glycerol-3-phosphate dehydrogenase family.

Its subcellular location is the cytoplasm. It catalyses the reaction sn-glycerol 3-phosphate + NAD(+) = dihydroxyacetone phosphate + NADH + H(+). It carries out the reaction sn-glycerol 3-phosphate + NADP(+) = dihydroxyacetone phosphate + NADPH + H(+). It functions in the pathway membrane lipid metabolism; glycerophospholipid metabolism. In terms of biological role, catalyzes the reduction of the glycolytic intermediate dihydroxyacetone phosphate (DHAP) to sn-glycerol 3-phosphate (G3P), the key precursor for phospholipid synthesis. This Oleidesulfovibrio alaskensis (strain ATCC BAA-1058 / DSM 17464 / G20) (Desulfovibrio alaskensis) protein is Glycerol-3-phosphate dehydrogenase [NAD(P)+].